The following is a 312-amino-acid chain: Pectin lyase (312 aa).

Residue arginine 201 is part of the active site. The disordered stretch occupies residues glycine 254–lysine 274. Positions glycine 256 to lysine 274 are enriched in polar residues.

It belongs to the polysaccharide lyase 1 family.

It carries out the reaction Eliminative cleavage of (1-&gt;4)-alpha-D-galacturonan methyl ester to give oligosaccharides with 4-deoxy-6-O-methyl-alpha-D-galact-4-enuronosyl groups at their non-reducing ends.. This Pseudomonas marginalis (Pseudomonas panacis) protein is Pectin lyase (pnl).